The primary structure comprises 388 residues: Xylose isomerase (388 aa).

Catalysis depends on residues H54 and D57. Mg(2+)-binding residues include E181, E217, H220, D245, D255, D257, and D287.

The protein belongs to the xylose isomerase family. Homotetramer. Mg(2+) serves as cofactor.

The protein resides in the cytoplasm. It catalyses the reaction alpha-D-xylose = alpha-D-xylulofuranose. In Streptomyces olivaceoviridis (Streptomyces corchorusii), this protein is Xylose isomerase.